Consider the following 865-residue polypeptide: General transcription factor 3C polypeptide 5 (865 aa).

Disordered stretches follow at residues 1 to 21 (MNDE…NNNS), 111 to 163 (RPNK…NEKF), 191 to 215 (NNNT…TVPI), 391 to 522 (QDNH…NKEG), and 669 to 865 (DNKM…EESE). Composition is skewed to low complexity over residues 7–21 (KNNS…NNNS), 115–126 (QQTQTQTQTQTQ), 140–158 (QSPK…QQPQ), 199–210 (DNVNDSSSSSSS), and 401–411 (SKNNNNNNNNK). 2 stretches are compositionally biased toward basic and acidic residues: residues 412-439 (DSIK…KQEE) and 448-489 (NNEK…KGDD). 2 stretches are compositionally biased toward low complexity: residues 508–521 (EGNN…NNKE) and 677–696 (RSNT…PKST). Composition is skewed to basic and acidic residues over residues 697–713 (QPKE…EPRP), 757–766 (QNKEIDESLK), and 773–786 (MEKD…KNEE). Acidic residues-rich tracts occupy residues 800–820 (DYDD…DFDG) and 839–865 (EDSE…EESE).

The protein belongs to the TFIIIC subunit 5 family. In terms of assembly, part of the TFIIIC complex.

Its subcellular location is the nucleus. In terms of biological role, involved in RNA polymerase III-mediated transcription. Integral, tightly associated component of the DNA-binding TFIIIC2 subcomplex that directly binds tRNA and virus-associated RNA promoters. In Dictyostelium discoideum (Social amoeba), this protein is General transcription factor 3C polypeptide 5 (gtf3c5).